A 389-amino-acid chain; its full sequence is S-adenosylmethionine synthase (389 aa).

Residue His17 participates in ATP binding. A Mg(2+)-binding site is contributed by Asp19. Glu45 serves as a coordination point for K(+). Positions 58 and 101 each coordinate L-methionine. The segment at Gln101–Gly111 is flexible loop. ATP contacts are provided by residues Asp170–Lys172, Arg237–Phe238, Asp246, Arg252–Lys253, Ala269, and Lys273. An L-methionine-binding site is contributed by Asp246. Lys277 serves as a coordination point for L-methionine.

Belongs to the AdoMet synthase family. In terms of assembly, homotetramer; dimer of dimers. Mg(2+) is required as a cofactor. K(+) serves as cofactor.

The protein localises to the cytoplasm. It carries out the reaction L-methionine + ATP + H2O = S-adenosyl-L-methionine + phosphate + diphosphate. It functions in the pathway amino-acid biosynthesis; S-adenosyl-L-methionine biosynthesis; S-adenosyl-L-methionine from L-methionine: step 1/1. Its function is as follows. Catalyzes the formation of S-adenosylmethionine (AdoMet) from methionine and ATP. The overall synthetic reaction is composed of two sequential steps, AdoMet formation and the subsequent tripolyphosphate hydrolysis which occurs prior to release of AdoMet from the enzyme. The polypeptide is S-adenosylmethionine synthase (Treponema denticola (strain ATCC 35405 / DSM 14222 / CIP 103919 / JCM 8153 / KCTC 15104)).